We begin with the raw amino-acid sequence, 410 residues long: Multifunctional CCA protein (410 aa).

ATP-binding residues include Gly8 and Arg11. Residues Gly8 and Arg11 each coordinate CTP. Mg(2+) contacts are provided by Asp21 and Asp23. ATP contacts are provided by Arg91, Arg143, and Arg146. Residues Arg91, Arg143, and Arg146 each coordinate CTP. The region spanning Thr232–Ile333 is the HD domain.

This sequence belongs to the tRNA nucleotidyltransferase/poly(A) polymerase family. Bacterial CCA-adding enzyme type 1 subfamily. In terms of assembly, monomer. Can also form homodimers and oligomers. The cofactor is Mg(2+). Ni(2+) is required as a cofactor.

The catalysed reaction is a tRNA precursor + 2 CTP + ATP = a tRNA with a 3' CCA end + 3 diphosphate. The enzyme catalyses a tRNA with a 3' CCA end + 2 CTP + ATP = a tRNA with a 3' CCACCA end + 3 diphosphate. Functionally, catalyzes the addition and repair of the essential 3'-terminal CCA sequence in tRNAs without using a nucleic acid template. Adds these three nucleotides in the order of C, C, and A to the tRNA nucleotide-73, using CTP and ATP as substrates and producing inorganic pyrophosphate. tRNA 3'-terminal CCA addition is required both for tRNA processing and repair. Also involved in tRNA surveillance by mediating tandem CCA addition to generate a CCACCA at the 3' terminus of unstable tRNAs. While stable tRNAs receive only 3'-terminal CCA, unstable tRNAs are marked with CCACCA and rapidly degraded. The polypeptide is Multifunctional CCA protein (Paraburkholderia phytofirmans (strain DSM 17436 / LMG 22146 / PsJN) (Burkholderia phytofirmans)).